We begin with the raw amino-acid sequence, 211 residues long: tRNA (guanine-N(7)-)-methyltransferase (211 aa).

4 residues coordinate S-adenosyl-L-methionine: E44, D69, D96, and D118. D118 is an active-site residue. K122 provides a ligand contact to substrate. The tract at residues 124-129 (KHEKRR) is interaction with RNA. Substrate-binding positions include D154 and 191–194 (TEYE).

This sequence belongs to the class I-like SAM-binding methyltransferase superfamily. TrmB family.

It carries out the reaction guanosine(46) in tRNA + S-adenosyl-L-methionine = N(7)-methylguanosine(46) in tRNA + S-adenosyl-L-homocysteine. Its pathway is tRNA modification; N(7)-methylguanine-tRNA biosynthesis. Catalyzes the formation of N(7)-methylguanine at position 46 (m7G46) in tRNA. In Streptococcus pyogenes serotype M6 (strain ATCC BAA-946 / MGAS10394), this protein is tRNA (guanine-N(7)-)-methyltransferase.